The chain runs to 282 residues: HTH-type transcriptional activator RhaR (282 aa).

Positions 179–277 (DKLITALANS…GMTPSQWRHL (99 aa)) constitute an HTH araC/xylS-type domain. DNA-binding regions (H-T-H motif) lie at residues 196 to 217 (DAFCQQEQCSERVLRQQFRAQT) and 244 to 267 (ISEISMQCGFEDSNYFSVVFTRET).

Binds DNA as a dimer.

It is found in the cytoplasm. Functionally, activates expression of the rhaSR operon in response to L-rhamnose. This Salmonella agona (strain SL483) protein is HTH-type transcriptional activator RhaR.